Here is a 792-residue protein sequence, read N- to C-terminus: G-type lectin S-receptor-like serine/threonine-protein kinase At1g61440 (792 aa).

An N-terminal signal peptide occupies residues 1 to 17; the sequence is MGKKRIVLLLFISFSYA. The region spanning 18-137 is the Bulb-type lectin domain; that stretch reads EITKESPLSI…VTGRTLWESF (120 aa). The Extracellular portion of the chain corresponds to 18–419; sequence EITKESPLSI…ELDVHKRKMT (402 aa). 3 N-linked (GlcNAc...) asparagine glycosylation sites follow: N46, N127, and N229. Residues 271 to 307 enclose the EGF-like; atypical domain; the sequence is PANSCDIYGVCGPFGFCVISDPPKCKCFKGFVPKSIE. 2 cysteine pairs are disulfide-bonded: C275-C287 and C281-C295. N-linked (GlcNAc...) asparagine glycosylation is found at N313, N329, and N368. The PAN domain occupies 326 to 408; the sequence is CQGNSTGKDA…GEILSIRLAH (83 aa). Intrachain disulfides connect C361–C382 and C365–C371. A helical membrane pass occupies residues 420-440; the sequence is IVASTVSLTLFVILGFATFGF. Residues 441–792 are Cytoplasmic-facing; the sequence is WRNRVKHHDA…EMTESVILGR (352 aa). Residues 478-763 form the Protein kinase domain; sequence FSLSNKLGHG…DLPLPKQPTF (286 aa). ATP contacts are provided by residues 484 to 492 and K506; that span reads LGHGGFGSV. 2 positions are modified to phosphoserine: S512 and S527. A caM-binding region spans residues 567-584; sequence RKRLELDWPKRFDIIQGI. D603 (proton acceptor) is an active-site residue. 2 positions are modified to phosphoserine: S607 and S620. A Phosphothreonine modification is found at T637. Residues S680 and S774 each carry the phosphoserine modification.

This sequence belongs to the protein kinase superfamily. Ser/Thr protein kinase family.

The protein resides in the cell membrane. The catalysed reaction is L-seryl-[protein] + ATP = O-phospho-L-seryl-[protein] + ADP + H(+). It carries out the reaction L-threonyl-[protein] + ATP = O-phospho-L-threonyl-[protein] + ADP + H(+). This is G-type lectin S-receptor-like serine/threonine-protein kinase At1g61440 from Arabidopsis thaliana (Mouse-ear cress).